Here is a 591-residue protein sequence, read N- to C-terminus: Aspartate--tRNA(Asp/Asn) ligase (591 aa).

E174 serves as a coordination point for L-aspartate. An aspartate region spans residues 198-201 (QLFK). Residue R220 coordinates L-aspartate. ATP contacts are provided by residues 220-222 (RDE) and Q229. H450 is an L-aspartate binding site. E483 contributes to the ATP binding site. R490 serves as a coordination point for L-aspartate. 535 to 538 (GLDR) is an ATP binding site.

This sequence belongs to the class-II aminoacyl-tRNA synthetase family. Type 1 subfamily. Homodimer.

It is found in the cytoplasm. The enzyme catalyses tRNA(Asx) + L-aspartate + ATP = L-aspartyl-tRNA(Asx) + AMP + diphosphate. Aspartyl-tRNA synthetase with relaxed tRNA specificity since it is able to aspartylate not only its cognate tRNA(Asp) but also tRNA(Asn). Reaction proceeds in two steps: L-aspartate is first activated by ATP to form Asp-AMP and then transferred to the acceptor end of tRNA(Asp/Asn). The sequence is that of Aspartate--tRNA(Asp/Asn) ligase from Pseudomonas fluorescens (strain Pf0-1).